The primary structure comprises 332 residues: Glycerol-3-phosphate dehydrogenase [NAD(P)+] (332 aa).

Residues W15, R35, and K108 each coordinate NADPH. The sn-glycerol 3-phosphate site is built by K108, G137, and S139. A141 contacts NADPH. The sn-glycerol 3-phosphate site is built by K192, D245, S255, R256, and N257. K192 (proton acceptor) is an active-site residue. NADPH is bound at residue R256. L278 and E280 together coordinate NADPH.

The protein belongs to the NAD-dependent glycerol-3-phosphate dehydrogenase family.

Its subcellular location is the cytoplasm. The catalysed reaction is sn-glycerol 3-phosphate + NAD(+) = dihydroxyacetone phosphate + NADH + H(+). The enzyme catalyses sn-glycerol 3-phosphate + NADP(+) = dihydroxyacetone phosphate + NADPH + H(+). It functions in the pathway membrane lipid metabolism; glycerophospholipid metabolism. Functionally, catalyzes the reduction of the glycolytic intermediate dihydroxyacetone phosphate (DHAP) to sn-glycerol 3-phosphate (G3P), the key precursor for phospholipid synthesis. The chain is Glycerol-3-phosphate dehydrogenase [NAD(P)+] from Methylobacterium radiotolerans (strain ATCC 27329 / DSM 1819 / JCM 2831 / NBRC 15690 / NCIMB 10815 / 0-1).